A 586-amino-acid polypeptide reads, in one-letter code: 25S rRNA (adenine-N(1))-methyltransferase (586 aa).

Disordered stretches follow at residues 23–229 (GTAP…LTPL) and 536–573 (GKCV…EVKD). The span at 25-41 (APAAPAPASAPAVSSSK) shows a compositional bias: low complexity. Positions 65 to 83 (LWEKVIEQKKEGVADGVKK) are enriched in basic and acidic residues. Residues 99-108 (KLSNSNNDGN) show a composition bias toward polar residues. Over residues 114–123 (NNKKKNKNKN) the composition is skewed to basic residues. Residues 144–163 (GEEDEDDNNDDADEWEGIDE) show a composition bias toward acidic residues. The span at 164–182 (DEKHASSEKPTPKKDDKKQ) shows a compositional bias: basic and acidic residues. Positions 183–192 (QQLQQQQQQK) are enriched in low complexity. The segment covering 204 to 213 (NGTTSNWQQD) has biased composition (polar residues). Positions 217-229 (PKTATPAPKLTPL) are enriched in low complexity. A compositionally biased stretch (basic and acidic residues) spans 539 to 549 (VPKDGQEDTTK). The segment covering 550 to 559 (NKKGGQKPKP) has biased composition (basic residues).

The protein belongs to the methyltransferase superfamily. RRP8 family.

Its subcellular location is the nucleus. It is found in the nucleolus. Functionally, S-adenosyl-L-methionine-dependent methyltransferase that specifically methylates the N(1) position of a conserved adenine in helix 25.1 in 25S rRNA. Required both for ribosomal 40S and 60S subunits biogenesis. Required for efficient pre-rRNA cleavage at site A2. This is 25S rRNA (adenine-N(1))-methyltransferase (RPR8) from Chaetomium thermophilum (strain DSM 1495 / CBS 144.50 / IMI 039719) (Thermochaetoides thermophila).